A 164-amino-acid chain; its full sequence is Succinate dehydrogenase assembly factor 3, mitochondrial (164 aa).

A mitochondrion-targeting transit peptide spans methionine 1–glycine 51. The segment covering lysine 136–alanine 145 has biased composition (basic and acidic residues). Residues lysine 136–serine 164 form a disordered region. The span at valine 153–serine 164 shows a compositional bias: polar residues.

Belongs to the complex I LYR family. SDHAF3 subfamily. As to quaternary structure, interacts with the iron-sulfur protein subunit within the SDH catalytic dimer.

It is found in the mitochondrion matrix. Plays an essential role in the assembly of succinate dehydrogenase (SDH), an enzyme complex (also referred to as respiratory complex II) that is a component of both the tricarboxylic acid (TCA) cycle and the mitochondrial electron transport chain, and which couples the oxidation of succinate to fumarate with the reduction of ubiquinone (coenzyme Q) to ubiquinol. Promotes maturation of the iron-sulfur protein subunit of the SDH catalytic dimer, protecting it from the deleterious effects of oxidants. May act together with SDHAF1. The chain is Succinate dehydrogenase assembly factor 3, mitochondrial from Cryptococcus neoformans var. neoformans serotype D (strain B-3501A) (Filobasidiella neoformans).